Reading from the N-terminus, the 352-residue chain is Adenosine deaminase (352 aa).

Position 2 is an N-acetylalanine (A2). The Zn(2+) site is built by H15 and H17. Residues H17 and D19 each contribute to the substrate site. K54 carries the N6-acetyllysine modification. G184 is a substrate binding site. Zn(2+) is bound at residue H214. Residue E217 is the Proton donor of the active site. K232 is modified (N6-acetyllysine). Position 295 (D295) interacts with Zn(2+). D296 contributes to the substrate binding site.

This sequence belongs to the metallo-dependent hydrolases superfamily. Adenosine and AMP deaminases family. In terms of assembly, interacts with DPP4 (via extracellular domain). Interacts with PLG (via Kringle 4 domain); the interaction stimulates PLG activation when in complex with DPP4. The cofactor is Zn(2+). In terms of tissue distribution, detected in brain neurons in the median emninence (at protein level). Expressed in secondary deciduum (at protein level). Found in all tissues, occurs in large amounts in T-lymphocytes and, at the time of weaning, in gastrointestinal tissues.

It is found in the cell membrane. The protein localises to the cell junction. Its subcellular location is the cytoplasmic vesicle lumen. The protein resides in the cytoplasm. It localises to the lysosome. It catalyses the reaction adenosine + H2O + H(+) = inosine + NH4(+). The catalysed reaction is 2'-deoxyadenosine + H2O + H(+) = 2'-deoxyinosine + NH4(+). It carries out the reaction cordycepin + H2O + H(+) = 3'-deoxyinosine + NH4(+). Its function is as follows. Catalyzes the hydrolytic deamination of adenosine and 2-deoxyadenosine. Plays an important role in purine metabolism and in adenosine homeostasis. Modulates signaling by extracellular adenosine, and so contributes indirectly to cellular signaling events. Acts as a positive regulator of T-cell coactivation, by binding DPP4. Its interaction with DPP4 regulates lymphocyte-epithelial cell adhesion. Enhances dendritic cell immunogenicity by affecting dendritic cell costimulatory molecule expression and cytokines and chemokines secretion. Enhances CD4+ T-cell differentiation and proliferation. Acts as a positive modulator of adenosine receptors ADORA1 and ADORA2A, by enhancing their ligand affinity via conformational change. Stimulates plasminogen activation. Plays a role in male fertility. Plays a protective role in early postimplantation embryonic development. Also responsible for the deamination of cordycepin (3'-deoxyadenosine), a fungal natural product that shows antitumor, antibacterial, antifungal, antivirus, and immune regulation properties. In Mus musculus (Mouse), this protein is Adenosine deaminase (Ada).